The chain runs to 293 residues: Methylsterol monooxygenase 1 (293 aa).

2 helical membrane-spanning segments follow: residues 55–75 (LIVH…FQFI) and 100–120 (GILF…YYFT). In terms of domain architecture, Fatty acid hydroxylase spans 144-274 (GCAVIEDTWH…FTWWDRIFGT (131 aa)). The short motif at 157 to 161 (HRLLH) is the Histidine box-1 element. A Histidine box-2 motif is present at residues 170–174 (HKVHH). A helical membrane pass occupies residues 199–219 (FFIGIVLLCDHVILLWAWVTM). A Histidine box-3 motif is present at residues 249–255 (HHDFHHM).

The protein belongs to the sterol desaturase family. Requires Fe cation as cofactor. In terms of processing, ubiquitinated by MARCHF6, leading to proteasomal degradation.

Its subcellular location is the endoplasmic reticulum membrane. It catalyses the reaction 4,4-dimethyl-5alpha-cholest-7-en-3beta-ol + 6 Fe(II)-[cytochrome b5] + 3 O2 + 5 H(+) = 4alpha-carboxy-4beta-methyl-5alpha-cholest-7-ene-3beta-ol + 6 Fe(III)-[cytochrome b5] + 4 H2O. The enzyme catalyses 4,4-dimethyl-5alpha-cholesta-8,24-dien-3beta-ol + 6 Fe(II)-[cytochrome b5] + 3 O2 + 5 H(+) = 4beta-methylzymosterol-4alpha-carboxylate + 6 Fe(III)-[cytochrome b5] + 4 H2O. The catalysed reaction is 4alpha-methylzymosterol + 6 Fe(II)-[cytochrome b5] + 3 O2 + 5 H(+) = 4alpha-carboxyzymosterol + 6 Fe(III)-[cytochrome b5] + 4 H2O. It carries out the reaction 4alpha-methyl-5alpha-cholest-7-en-3beta-ol + 6 Fe(II)-[cytochrome b5] + 3 O2 + 5 H(+) = 4alpha-carboxy-5alpha-cholest-7-en-3beta-ol + 6 Fe(III)-[cytochrome b5] + 4 H2O. It catalyses the reaction 4,4-dimethyl-5alpha-cholest-8-en-3beta-ol + 6 Fe(II)-[cytochrome b5] + 3 O2 + 5 H(+) = 4alpha-carboxy-4beta-methyl-5alpha-cholest-8-en-3beta-ol + 6 Fe(III)-[cytochrome b5] + 4 H2O. The enzyme catalyses 4alpha-methyl-5alpha-cholest-8-en-3beta-ol + 6 Fe(II)-[cytochrome b5] + 3 O2 + 5 H(+) = 4alpha-carboxy-5alpha-cholest-8-ene-3beta-ol + 6 Fe(III)-[cytochrome b5] + 4 H2O. It participates in steroid biosynthesis; zymosterol biosynthesis; zymosterol from lanosterol: step 3/6. The protein operates within steroid biosynthesis; cholesterol biosynthesis. Catalyzes the three-step monooxygenation required for the demethylation of 4,4-dimethyl and 4alpha-methylsterols, which can be subsequently metabolized to cholesterol. This chain is Methylsterol monooxygenase 1 (Msmo1), found in Rattus norvegicus (Rat).